We begin with the raw amino-acid sequence, 330 residues long: Glycerol-3-phosphate dehydrogenase [NAD(P)+] (330 aa).

Ser10, Trp11, Arg31, and Lys105 together coordinate NADPH. Lys105, Gly135, and Ser137 together coordinate sn-glycerol 3-phosphate. Ala139 is an NADPH binding site. Residues Lys190, Asp243, Ser253, Arg254, and Asn255 each coordinate sn-glycerol 3-phosphate. Lys190 (proton acceptor) is an active-site residue. Arg254 contributes to the NADPH binding site. 2 residues coordinate NADPH: Val278 and Glu280.

This sequence belongs to the NAD-dependent glycerol-3-phosphate dehydrogenase family.

It localises to the cytoplasm. The catalysed reaction is sn-glycerol 3-phosphate + NAD(+) = dihydroxyacetone phosphate + NADH + H(+). It carries out the reaction sn-glycerol 3-phosphate + NADP(+) = dihydroxyacetone phosphate + NADPH + H(+). It functions in the pathway membrane lipid metabolism; glycerophospholipid metabolism. Functionally, catalyzes the reduction of the glycolytic intermediate dihydroxyacetone phosphate (DHAP) to sn-glycerol 3-phosphate (G3P), the key precursor for phospholipid synthesis. This chain is Glycerol-3-phosphate dehydrogenase [NAD(P)+], found in Nitratidesulfovibrio vulgaris (strain DP4) (Desulfovibrio vulgaris).